Here is a 211-residue protein sequence, read N- to C-terminus: Thymidylate kinase (211 aa).

10–17 (GVEGCGKT) is an ATP binding site.

The protein belongs to the thymidylate kinase family.

The catalysed reaction is dTMP + ATP = dTDP + ADP. In terms of biological role, phosphorylation of dTMP to form dTDP in both de novo and salvage pathways of dTTP synthesis. This is Thymidylate kinase from Trichormus variabilis (strain ATCC 29413 / PCC 7937) (Anabaena variabilis).